The primary structure comprises 423 residues: Gamma-glutamyl phosphate reductase (423 aa).

A compositionally biased stretch (low complexity) spans 1–14 (MTLQAAPRSAAAQQ). The segment at 1 to 25 (MTLQAAPRSAAAQQREPDLRQEVHD) is disordered. Residues 15-25 (REPDLRQEVHD) are compositionally biased toward basic and acidic residues.

The protein belongs to the gamma-glutamyl phosphate reductase family.

The protein localises to the cytoplasm. The enzyme catalyses L-glutamate 5-semialdehyde + phosphate + NADP(+) = L-glutamyl 5-phosphate + NADPH + H(+). Its pathway is amino-acid biosynthesis; L-proline biosynthesis; L-glutamate 5-semialdehyde from L-glutamate: step 2/2. In terms of biological role, catalyzes the NADPH-dependent reduction of L-glutamate 5-phosphate into L-glutamate 5-semialdehyde and phosphate. The product spontaneously undergoes cyclization to form 1-pyrroline-5-carboxylate. The polypeptide is Gamma-glutamyl phosphate reductase (Mycobacterium ulcerans (strain Agy99)).